A 619-amino-acid chain; its full sequence is Alpha-L-arabinofuranosidase C (619 aa).

The N-terminal stretch at 1–37 (MINHNKTPNILAKVFKRTCGLVSTGAALAILSQAASA) is a signal peptide. Positions 38-136 (ACTYTIDSEW…TVTGAACNSA (99 aa)) constitute a CBM2 domain. Cysteines 39 and 133 form a disulfide. The 127-residue stretch at 163–289 (LLQEAQAGFC…LPNIDSLSVV (127 aa)) folds into the CBM6 domain. The segment at 300–319 (SVSSSSSVQSSSSSSSTPSQ) is disordered.

Belongs to the glycosyl hydrolase 62 family.

The protein localises to the secreted. The catalysed reaction is Hydrolysis of terminal non-reducing alpha-L-arabinofuranoside residues in alpha-L-arabinosides.. It participates in glycan metabolism; hemicellulose degradation. Functionally, xylanase C contributes to hydrolyze hemicellulose, the major component of plant cell-walls. The polypeptide is Alpha-L-arabinofuranosidase C (xynC) (Cellvibrio japonicus (strain Ueda107) (Pseudomonas fluorescens subsp. cellulosa)).